The sequence spans 373 residues: Queuine tRNA-ribosyltransferase (373 aa).

The Proton acceptor role is filled by Asp-90. Residues 90–94 (DSGGF), Asp-144, Gln-193, and Gly-220 contribute to the substrate site. An RNA binding region spans residues 251-257 (GVGTPED). The active-site Nucleophile is Asp-270. Residues 275–279 (TRNAR) form an RNA binding; important for wobble base 34 recognition region. 4 residues coordinate Zn(2+): Cys-308, Cys-310, Cys-313, and His-339.

It belongs to the queuine tRNA-ribosyltransferase family. Homodimer. Within each dimer, one monomer is responsible for RNA recognition and catalysis, while the other monomer binds to the replacement base PreQ1. Zn(2+) is required as a cofactor.

The enzyme catalyses 7-aminomethyl-7-carbaguanine + guanosine(34) in tRNA = 7-aminomethyl-7-carbaguanosine(34) in tRNA + guanine. It functions in the pathway tRNA modification; tRNA-queuosine biosynthesis. Its function is as follows. Catalyzes the base-exchange of a guanine (G) residue with the queuine precursor 7-aminomethyl-7-deazaguanine (PreQ1) at position 34 (anticodon wobble position) in tRNAs with GU(N) anticodons (tRNA-Asp, -Asn, -His and -Tyr). Catalysis occurs through a double-displacement mechanism. The nucleophile active site attacks the C1' of nucleotide 34 to detach the guanine base from the RNA, forming a covalent enzyme-RNA intermediate. The proton acceptor active site deprotonates the incoming PreQ1, allowing a nucleophilic attack on the C1' of the ribose to form the product. After dissociation, two additional enzymatic reactions on the tRNA convert PreQ1 to queuine (Q), resulting in the hypermodified nucleoside queuosine (7-(((4,5-cis-dihydroxy-2-cyclopenten-1-yl)amino)methyl)-7-deazaguanosine). This is Queuine tRNA-ribosyltransferase from Campylobacter jejuni subsp. jejuni serotype O:6 (strain 81116 / NCTC 11828).